Reading from the N-terminus, the 255-residue chain is 3-deoxy-manno-octulosonate cytidylyltransferase (255 aa).

This sequence belongs to the KdsB family.

The protein resides in the cytoplasm. The enzyme catalyses 3-deoxy-alpha-D-manno-oct-2-ulosonate + CTP = CMP-3-deoxy-beta-D-manno-octulosonate + diphosphate. Its pathway is nucleotide-sugar biosynthesis; CMP-3-deoxy-D-manno-octulosonate biosynthesis; CMP-3-deoxy-D-manno-octulosonate from 3-deoxy-D-manno-octulosonate and CTP: step 1/1. It functions in the pathway bacterial outer membrane biogenesis; lipopolysaccharide biosynthesis. Functionally, activates KDO (a required 8-carbon sugar) for incorporation into bacterial lipopolysaccharide in Gram-negative bacteria. In Pelobacter propionicus (strain DSM 2379 / NBRC 103807 / OttBd1), this protein is 3-deoxy-manno-octulosonate cytidylyltransferase.